A 148-amino-acid chain; its full sequence is Hemoglobin subunit alpha (148 aa).

Serine 1 is subject to N-acetylserine. In terms of domain architecture, Globin spans 8–148 (DYSAADRAEL…VCHELSSRYR (141 aa)). Histidine 66 contributes to the O2 binding site. Histidine 95 serves as a coordination point for heme b.

This sequence belongs to the globin family. In terms of assembly, heterotetramer of two alpha chains and two beta chains. Red blood cells.

In terms of biological role, involved in oxygen transport from the lung to the various peripheral tissues. The chain is Hemoglobin subunit alpha (HBA) from Heterodontus portusjacksoni (Port Jackson shark).